Here is a 244-residue protein sequence, read N- to C-terminus: Mitochondrial import inner membrane translocase subunit Tim21 (244 aa).

The N-terminal 18 residues, 1-18, are a transit peptide targeting the mitochondrion; that stretch reads MICTLLRAVRCTERLHGC. Residues 69 to 89 form a disordered region; sequence VRSPQSAKEDGSKQVSVHRSQ. The helical transmembrane segment at 108–128 threads the bilayer; the sequence is FTYLIVVLIGISITGGLFYTI.

The protein belongs to the TIM21 family. In terms of assembly, component of the TIM23 complex. Component of the MITRAC (mitochondrial translation regulation assembly intermediate of cytochrome c oxidase complex) complex, the core components of this complex being COA3/MITRAC12 and COX14. Interacts with COA3 and MT-CO1/COX1.

It localises to the mitochondrion membrane. In terms of biological role, participates in the translocation of transit peptide-containing proteins across the mitochondrial inner membrane. Also required for assembly of mitochondrial respiratory chain complex I and complex IV as component of the MITRAC (mitochondrial translation regulation assembly intermediate of cytochrome c oxidase complex) complex. Probably shuttles between the presequence translocase and respiratory-chain assembly intermediates in a process that promotes incorporation of early nuclear-encoded subunits into these complexes. In Bos taurus (Bovine), this protein is Mitochondrial import inner membrane translocase subunit Tim21 (TIMM21).